The primary structure comprises 476 residues: Aspartyl/glutamyl-tRNA(Asn/Gln) amidotransferase subunit B (476 aa).

The protein belongs to the GatB/GatE family. GatB subfamily. Heterotrimer of A, B and C subunits.

The catalysed reaction is L-glutamyl-tRNA(Gln) + L-glutamine + ATP + H2O = L-glutaminyl-tRNA(Gln) + L-glutamate + ADP + phosphate + H(+). It catalyses the reaction L-aspartyl-tRNA(Asn) + L-glutamine + ATP + H2O = L-asparaginyl-tRNA(Asn) + L-glutamate + ADP + phosphate + 2 H(+). Functionally, allows the formation of correctly charged Asn-tRNA(Asn) or Gln-tRNA(Gln) through the transamidation of misacylated Asp-tRNA(Asn) or Glu-tRNA(Gln) in organisms which lack either or both of asparaginyl-tRNA or glutaminyl-tRNA synthetases. The reaction takes place in the presence of glutamine and ATP through an activated phospho-Asp-tRNA(Asn) or phospho-Glu-tRNA(Gln). The sequence is that of Aspartyl/glutamyl-tRNA(Asn/Gln) amidotransferase subunit B from Lactobacillus helveticus (strain DPC 4571).